The following is a 66-amino-acid chain: Large ribosomal subunit protein bL35 (66 aa).

The span at 1–28 shows a compositional bias: basic residues; that stretch reads MPKMKTHRGSAKRFKRTGSGKLKRRHGF. Positions 1–50 are disordered; it reads MPKMKTHRGSAKRFKRTGSGKLKRRHGFTSHMFANKSQKQKRKLRKSAMV.

It belongs to the bacterial ribosomal protein bL35 family.

The protein is Large ribosomal subunit protein bL35 of Listeria monocytogenes serotype 4a (strain HCC23).